A 183-amino-acid polypeptide reads, in one-letter code: Nucleosome assembly protein 1-like 5 (183 aa).

The segment at 1–71 (MADSENQGPA…APKPKNDFIE (71 aa)) is disordered. 2 stretches are compositionally biased toward low complexity: residues 7–21 (QGPA…AAEA) and 28–49 (AEGG…SAAG). A coiled-coil region spans residues 81–107 (VLALKKLQKRCDKIEAKFDKEFQALEK). Over residues 135-161 (EGEEEEEEEYEDDEEEGEEEEEEEEAA) the composition is skewed to acidic residues. The interval 135 to 183 (EGEEEEEEEYEDDEEEGEEEEEEEEAAAEAAAGAKHDDAHAEMPDDAKK) is disordered. Residues 168-183 (AKHDDAHAEMPDDAKK) are compositionally biased toward basic and acidic residues.

Belongs to the nucleosome assembly protein (NAP) family.

The protein localises to the nucleus. This chain is Nucleosome assembly protein 1-like 5 (NAP1L5), found in Pongo abelii (Sumatran orangutan).